The sequence spans 100 residues: Urease subunit gamma (100 aa).

This sequence belongs to the urease gamma subunit family. Heterotrimer of UreA (gamma), UreB (beta) and UreC (alpha) subunits. Three heterotrimers associate to form the active enzyme.

It localises to the cytoplasm. It catalyses the reaction urea + 2 H2O + H(+) = hydrogencarbonate + 2 NH4(+). It functions in the pathway nitrogen metabolism; urea degradation; CO(2) and NH(3) from urea (urease route): step 1/1. This chain is Urease subunit gamma, found in Alcanivorax borkumensis (strain ATCC 700651 / DSM 11573 / NCIMB 13689 / SK2).